Consider the following 111-residue polypeptide: Nucleoid-associated protein Ppha_1174 (111 aa).

Belongs to the YbaB/EbfC family. Homodimer.

It is found in the cytoplasm. The protein localises to the nucleoid. Functionally, binds to DNA and alters its conformation. May be involved in regulation of gene expression, nucleoid organization and DNA protection. This chain is Nucleoid-associated protein Ppha_1174, found in Pelodictyon phaeoclathratiforme (strain DSM 5477 / BU-1).